The chain runs to 49 residues: Large ribosomal subunit protein bL32 (49 aa).

The protein belongs to the bacterial ribosomal protein bL32 family.

The sequence is that of Large ribosomal subunit protein bL32 from Helicobacter hepaticus (strain ATCC 51449 / 3B1).